The following is a 151-amino-acid chain: Large ribosomal subunit protein bL9 (151 aa).

The protein belongs to the bacterial ribosomal protein bL9 family.

In terms of biological role, binds to the 23S rRNA. This chain is Large ribosomal subunit protein bL9, found in Prochlorococcus marinus (strain MIT 9515).